The primary structure comprises 729 residues: Golgin subfamily A member 5 (729 aa).

Residue Ser2 is modified to N-acetylserine. The Cytoplasmic segment spans residues 2–696 (SWFADLAGRA…IFLRRYPIAR (695 aa)). Arg27 and Arg89 each carry dimethylated arginine. Disordered stretches follow at residues 89-222 (RTVG…SQEL) and 626-645 (SASS…VDSG). Position 116 is a phosphoserine (Ser116). A compositionally biased stretch (basic and acidic residues) spans 134 to 146 (PTGRVEVKKEKGR). The span at 148–167 (PVSPSSPSGVSSVNTSVTTT) shows a compositional bias: low complexity. Polar residues-rich tracts occupy residues 175-186 (GSQSPGVNSSDS) and 626-638 (SASS…SAIN). Residues 215–629 (GSSRSQELSN…LEQQVHSASS (415 aa)) are a coiled coil. A helical; Anchor for type IV membrane protein membrane pass occupies residues 697–717 (VFVIIYMALLHLWVMIVLLTY). Residues 718-729 (SPEMHHDQPYGK) lie on the Lumenal side of the membrane.

Homodimer. Interacts with RAB1A that has been activated by GTP-binding. Interacts with isoform CASP of CUX1. Highly phosphorylated during mitosis. Phosphorylation is barely detectable during interphase.

It is found in the golgi apparatus membrane. In terms of biological role, involved in maintaining Golgi structure. Stimulates the formation of Golgi stacks and ribbons. Involved in intra-Golgi retrograde transport. The polypeptide is Golgin subfamily A member 5 (Golga5) (Mus musculus (Mouse)).